The primary structure comprises 220 residues: Protein LURP-one-related 12 (220 aa).

It belongs to the LOR family.

Might be related to the phospholipid scramblase and tubby-like superfamily of membrane tethered transcription factors. This Arabidopsis thaliana (Mouse-ear cress) protein is Protein LURP-one-related 12.